The chain runs to 201 residues: Peptidyl-prolyl cis-trans isomerase FKBP11 (201 aa).

Positions 1–27 (MTLRPSLLPLHLLLLLLLSAAVCRAEA) are cleaved as a signal peptide. Positions 57–144 (GDTLHIHYTG…QYDVELIALI (88 aa)) constitute a PPIase FKBP-type domain. The helical transmembrane segment at 156 to 176 (ILPLVGMAMVPALLGLIGYHL) threads the bilayer.

This sequence belongs to the FKBP-type PPIase family. In terms of assembly, interacts with IFITM5.

It localises to the membrane. The catalysed reaction is [protein]-peptidylproline (omega=180) = [protein]-peptidylproline (omega=0). PPIases accelerate the folding of proteins during protein synthesis. This chain is Peptidyl-prolyl cis-trans isomerase FKBP11 (FKBP11), found in Homo sapiens (Human).